The following is a 365-amino-acid chain: Protein RecA (365 aa).

Residue 69-76 coordinates ATP; that stretch reads GPESSGKT. The disordered stretch occupies residues 344-365; that stretch reads LDDNPDTDDHDVEDIDENTDEE. Over residues 347–365 the composition is skewed to acidic residues; that stretch reads NPDTDDHDVEDIDENTDEE.

Belongs to the RecA family.

Its subcellular location is the cytoplasm. In terms of biological role, can catalyze the hydrolysis of ATP in the presence of single-stranded DNA, the ATP-dependent uptake of single-stranded DNA by duplex DNA, and the ATP-dependent hybridization of homologous single-stranded DNAs. It interacts with LexA causing its activation and leading to its autocatalytic cleavage. The polypeptide is Protein RecA (Arthrospira platensis (Spirulina platensis)).